The following is a 396-amino-acid chain: Elongation factor Tu (396 aa).

The region spanning 10–206 (KPHVNVGTIG…AVDAYIPTPQ (197 aa)) is the tr-type G domain. Residues 19–26 (GHVDHGKT) are G1. Residue 19-26 (GHVDHGKT) coordinates GTP. Thr26 lines the Mg(2+) pocket. Residues 60–64 (GITIA) are G2. The segment at 81-84 (DCPG) is G3. GTP contacts are provided by residues 81-85 (DCPGH) and 136-139 (NKVD). Residues 136–139 (NKVD) are G4. The segment at 174-176 (SAL) is G5.

It belongs to the TRAFAC class translation factor GTPase superfamily. Classic translation factor GTPase family. EF-Tu/EF-1A subfamily. Monomer.

The protein resides in the cytoplasm. It carries out the reaction GTP + H2O = GDP + phosphate + H(+). Functionally, GTP hydrolase that promotes the GTP-dependent binding of aminoacyl-tRNA to the A-site of ribosomes during protein biosynthesis. This Anaeromyxobacter dehalogenans (strain 2CP-C) protein is Elongation factor Tu.